Reading from the N-terminus, the 358-residue chain is Triacylglycerol lipase (358 aa).

Positions 1–39 (MVRSMRSRVAARAVAWALAVMPLAGAAGLTMAASPAAVA) are cleaved as a signal peptide. An AB hydrolase-1 domain is found at 48–327 (YPVILVHGLA…TSYHWNHLDE (280 aa)). Leu56 contacts substrate. Ser126 functions as the Nucleophile in the catalytic mechanism. Gln127 serves as a coordination point for substrate. A disulfide bridge links Cys229 with Cys308. Asp280 contributes to the Ca(2+) binding site. Catalysis depends on charge relay system residues Asp302 and His324. Ca(2+)-binding residues include Asp326, Gln330, and Val334.

Belongs to the AB hydrolase superfamily. Pseudomonas lipase family. In terms of assembly, monomer. Interacts with lipase-specific foldase Lif. Ca(2+) serves as cofactor.

Its subcellular location is the secreted. The enzyme catalyses a triacylglycerol + H2O = a diacylglycerol + a fatty acid + H(+). Its function is as follows. Catalyzes the hydrolysis of triacylglycerol. The chain is Triacylglycerol lipase from Burkholderia plantarii.